Consider the following 82-residue polypeptide: MAAKKEFNIFDHVLVPEHRILSEEEKEELLKKYRIRISQLPQIKASDPAVVALGAKPGDVIEIKRKSPTAGYYYYYRLVVED.

It belongs to the archaeal Rpo5/eukaryotic RPB5 RNA polymerase subunit family. As to quaternary structure, part of the RNA polymerase complex.

The protein resides in the cytoplasm. It catalyses the reaction RNA(n) + a ribonucleoside 5'-triphosphate = RNA(n+1) + diphosphate. DNA-dependent RNA polymerase (RNAP) catalyzes the transcription of DNA into RNA using the four ribonucleoside triphosphates as substrates. The chain is DNA-directed RNA polymerase subunit Rpo5 from Thermococcus kodakarensis (strain ATCC BAA-918 / JCM 12380 / KOD1) (Pyrococcus kodakaraensis (strain KOD1)).